The following is a 348-amino-acid chain: Heat-inducible transcription repressor HrcA (348 aa).

The protein belongs to the HrcA family.

Functionally, negative regulator of class I heat shock genes (grpE-dnaK-dnaJ and groELS operons). Prevents heat-shock induction of these operons. The polypeptide is Heat-inducible transcription repressor HrcA (Ruminiclostridium cellulolyticum (strain ATCC 35319 / DSM 5812 / JCM 6584 / H10) (Clostridium cellulolyticum)).